The primary structure comprises 133 residues: UPF0292 protein TK1411 (133 aa).

The Toprim domain maps to 20–100 (EGALIVEGLR…SVDIETWKEL (81 aa)). Mg(2+) is bound by residues E26, D69, and D71.

It belongs to the UPF0292 family. Mg(2+) serves as cofactor.

The polypeptide is UPF0292 protein TK1411 (Thermococcus kodakarensis (strain ATCC BAA-918 / JCM 12380 / KOD1) (Pyrococcus kodakaraensis (strain KOD1))).